The following is a 210-amino-acid chain: MKIVEVRHPLVQHKIGLLRDAALSTKGFRELVTELGTLLAYEATANLDTESHVQPGWAGPVEVQRIAGAKITLVPILRAGLGMLPGVLALIPAARVSVVGLQRDEETLQPVPYFERLTGRLEERDALILDPMLATGGTLIATIDMLKRAGARRIKGIFLVAAPEGLKALEAVHPDVEVYTAAIDDHLNEKGYILPGLGDAGDRIFGTRVE.

5-phospho-alpha-D-ribose 1-diphosphate contacts are provided by residues R78, R103, and 130 to 138 (DPMLATGGT). Residues I193 and 198-200 (GDA) each bind uracil. Residue D199 coordinates 5-phospho-alpha-D-ribose 1-diphosphate.

This sequence belongs to the UPRTase family. Mg(2+) is required as a cofactor.

It carries out the reaction UMP + diphosphate = 5-phospho-alpha-D-ribose 1-diphosphate + uracil. It participates in pyrimidine metabolism; UMP biosynthesis via salvage pathway; UMP from uracil: step 1/1. Its activity is regulated as follows. Allosterically activated by GTP. In terms of biological role, catalyzes the conversion of uracil and 5-phospho-alpha-D-ribose 1-diphosphate (PRPP) to UMP and diphosphate. The chain is Uracil phosphoribosyltransferase from Xanthomonas campestris pv. campestris (strain 8004).